Here is a 276-residue protein sequence, read N- to C-terminus: Plant cysteine oxidase 2 (276 aa).

The disordered stretch occupies residues 1 to 40; it reads MGTDTVMSGRVRKDLSKTNPNGNIPENRSNSRKKIQRRSK. The span at 17–28 shows a compositional bias: polar residues; sequence KTNPNGNIPENR. Positions 30–40 are enriched in basic residues; the sequence is NSRKKIQRRSK. Fe cation contacts are provided by His134, His136, and His197.

This sequence belongs to the cysteine dioxygenase family. It depends on Fe(2+) as a cofactor.

It is found in the nucleus. The protein localises to the cytoplasm. The catalysed reaction is L-cysteine + O2 = 3-sulfino-L-alanine + H(+). In terms of biological role, catalyzes the oxidation of N-terminal cysteine residues (N-Cys), thus preparing the protein for N-end rule pathway-mediated proteasomal degradation, upstream of the N-end rule enzymes ATE1, ATE2 and PRT6. Controls the preparation of the group VII ethylene response factor (ERF-VII) proteins for degradation via the 26S proteasome N-end rule pathway. Acts as an oxygen sensor that controls the stability of ERF-VII proteins, which are stabilized in flooding-induced hypoxia, and regulate transcriptional adaptation to these adverse conditions. Not active on Cys located inside or at the C-terminus of a peptide. Acts redundantly with PCO1 to repress the anaerobic response. The sequence is that of Plant cysteine oxidase 2 from Arabidopsis thaliana (Mouse-ear cress).